The sequence spans 314 residues: Beta-lactamase (314 aa).

Positions Met1–Arg39 form a signal peptide, tat-type signal. The segment at Thr31–Glu50 is disordered. Ser89 serves as the catalytic Acyl-ester intermediate. Lys259–Gly261 contacts substrate.

Belongs to the class-A beta-lactamase family. In terms of processing, predicted to be exported by the Tat system. The position of the signal peptide cleavage has been experimentally proven.

The catalysed reaction is a beta-lactam + H2O = a substituted beta-amino acid. The protein is Beta-lactamase of Streptomyces albus G.